Consider the following 451-residue polypeptide: ACT domain-containing protein ACR4 (451 aa).

ACT domains are found at residues 35–118 (VIRV…VIPS), 123–200 (VIEL…NTPR), 259–335 (VVTV…VSEG), and 337–416 (KLEL…QEQQ). Positions 409–428 (KNNPQEQQQRQKSPSHESPT) are disordered. Positions 410-420 (NNPQEQQQRQK) are enriched in polar residues.

In terms of tissue distribution, highly expressed in flowers and at lower levels in leaves and siliques.

May bind amino acids. The polypeptide is ACT domain-containing protein ACR4 (Arabidopsis thaliana (Mouse-ear cress)).